The chain runs to 537 residues: Serendipity locus protein alpha (537 aa).

It is found in the cytoplasm. Its subcellular location is the cell membrane. Required for the cellularization of the syncytial blastoderm embryo. Involved in the localization of the actin filaments just prior to and during plasma membrane invagination. Sry-alpha together with nullo and bnk may provide auxiliary functions, by acting both to stabilize a large and dynamic microfilament structure and regulate its functions. The polypeptide is Serendipity locus protein alpha (Sry-alpha) (Drosophila virilis (Fruit fly)).